Consider the following 791-residue polypeptide: MECGSHSGHRPIPIWLSSCLVAMCLGLPLGAAVPQEAPAYYYVGCYTARTDLLHESVYAKTPQTCIEICEHQGHHYAVLASEKCFCANVLEPQEQQDEQLCNTRCLANKAQYCGGVGVHSYYSTILTKQPGPHHLRISNKTENSLTLSWNAYEARKLLLAGGAEAVLPNQLLDNFLIKAQVLKTYSSLPAFPQPEFMVQSTETQFELTDLHPATLYNISVRAMCKDAQVGQSECGQASIEATTEVGLPSPVPAQPKILSRTDRTVTIELSPIRNDNGPLSKLLVIVEYVDNALSQPFDAQLLGSWQQAQQDGVPYYIAAELDYDRPEDNRTRRFVVGDGKRYGRFTNKPLDQPDAHVHISLGLVSTLEGVTKTMYSRGTHDQHVTSLDDFSYATFEKGQSSVVALAVTCVIFGSCLLLSLIAYFYLRYKTCRGRRLTGGNTHEMTLQTPIIERENNGYLVEDDPLPHSPENFKQQLQQLVEGYERIPRNALRLNVNDVIGDGRFGEIITGKVSTNDFARDCTLHVLCLDDLNGTTQAQLLRELRQLSQLKRQEHLLDFYGVSASPDWFYLIFEQQRMSLKRKLVESRLMAPSPRLTSLSEQLVLQWIYELASAMNYLSSCQVVHRQLCSHSVFVTSDFKLKLSVFGPLPYMNIARQQPDHNRWLAPEVLRHQHHHSTRSDVWSLACVAWECCALGGTPYANAVASNQQLLEAIRAAVRPAQPAYVYGDLYQLLLNCWQLEPSERSSCEDVAFGVRQLMTSPRHALSFDRVAGGLDTLPPYLPQLEAVATMG.

Positions 1-26 (MECGSHSGHRPIPIWLSSCLVAMCLG) are cleaved as a signal peptide. Over 27 to 401 (LPLGAAVPQE…YATFEKGQSS (375 aa)) the chain is Extracellular. Residues 39–125 (AYYYVGCYTA…VGVHSYYSTI (87 aa)) enclose the WSC domain. Positions 131-246 (GPHHLRISNK…ASIEATTEVG (116 aa)) constitute a Fibronectin type-III domain. Asn139, Asn217, and Asn329 each carry an N-linked (GlcNAc...) asparagine glycan. The helical transmembrane segment at 402 to 422 (VVALAVTCVIFGSCLLLSLIA) threads the bilayer. Topologically, residues 423–791 (YFYLRYKTCR…PQLEAVATMG (369 aa)) are cytoplasmic. The 266-residue stretch at 493 to 758 (LNVNDVIGDG…DVAFGVRQLM (266 aa)) folds into the Protein kinase domain. An ATP-binding site is contributed by 499-507 (IGDGRFGEI).

The protein belongs to the protein kinase superfamily. Tyr protein kinase family.

It is found in the membrane. Functionally, probably lacks tyrosine-protein kinase activity. This Drosophila melanogaster (Fruit fly) protein is Putative inactive tyrosine-protein kinase Wsck.